The following is a 506-amino-acid chain: Pleckstrin homology domain-containing family D member 1 (506 aa).

Residues 28–136 (KVQLYGVLWK…WLEMLQESGK (109 aa)) enclose the PH domain. The stretch at 146 to 391 (EAMIKSLEAQ…KVRNKEKEER (246 aa)) forms a coiled coil. At R503 the chain carries Omega-N-methylarginine.

It belongs to the PLEKHD1 family.

The sequence is that of Pleckstrin homology domain-containing family D member 1 (PLEKHD1) from Homo sapiens (Human).